A 234-amino-acid chain; its full sequence is RNA-binding protein pno1 (234 aa).

Residues 1-39 (MPTQDSAAKQADDGFQLVQKKSRKRKMTMDMDDADPKAG) form a disordered region. In terms of domain architecture, KH spans 158–207 (LARCIGRLAGKGGRTKFTIENVTKTRIVLADSKVHILGSYQNIRAARTAL).

The protein belongs to the PNO1 family.

The protein localises to the nucleus. Its subcellular location is the nucleolus. In Ixodes scapularis (Black-legged tick), this protein is RNA-binding protein pno1.